Reading from the N-terminus, the 356-residue chain is Inactive ubiquitin thioesterase OTULINL (356 aa).

The disordered stretch occupies residues 1 to 22 (MAATRSPTRARERERSGAPAAG). Residues 1–83 (MAATRSPTRA…KWWIGYLQRK (83 aa)) are required for membrane binding. The OTU domain occupies 128 to 356 (KCVRQVRRDN…NDRHYHIPVF (229 aa)).

It belongs to the peptidase C65 family. Otulin subfamily. Does not bind ubiquitin or ubiquitin-like proteins.

It is found in the cytoplasm. The protein localises to the endoplasmic reticulum membrane. It localises to the nucleus envelope. In terms of biological role, lacks deubiquitinase activity. The polypeptide is Inactive ubiquitin thioesterase OTULINL (Homo sapiens (Human)).